A 1409-amino-acid polypeptide reads, in one-letter code: MAP kinase-activating death domain protein (1409 aa).

In terms of domain architecture, uDENN spans 26-230 (RGASQSSPDA…VPVPGKTKVQ (205 aa)). One can recognise a cDENN domain in the interval 251-390 (RFTLIDFPLH…DATHLKERLK (140 aa)). The region spanning 392–496 (AINKMTTMTV…ECCLCPKNET (105 aa)) is the dDENN domain. 4 disordered regions span residues 654–701 (SFDH…MKGL), 761–784 (QHIV…QSKN), 902–1008 (SSSA…KVKT), and 1015–1034 (PQNL…SFLA). Polar residues-rich tracts occupy residues 680-691 (SDASDTPTSRGS) and 761-772 (QHIVRSKTQPNP). 2 stretches are compositionally biased toward low complexity: residues 773–784 (TSQQTANQQSKN) and 902–913 (SSSAPSTMTTPS). Positions 915–925 (HSNDILKESRP) are enriched in basic and acidic residues. A compositionally biased stretch (polar residues) spans 941 to 961 (LGQNVTPTSTNNHEIAQSTRS). Residues 963–1003 (ALPPPVPPREAPPIPKRNPPPLGAPPKVPEGARAPPPLPPR) are compositionally biased toward pro residues. Positions 1020–1031 (PNNQPAQPSSPS) are enriched in low complexity. In terms of domain architecture, Death spans 1109–1184 (GMDQEPSEMI…GLVCSKEINK (76 aa)).

Belongs to the MADD family. As to quaternary structure, interacts with cab-1. Expressed in nearly all neurons.

It is found in the cell membrane. It localises to the cytoplasm. In terms of biological role, guanyl-nucleotide exchange factor that regulates small GTPases. Converts GDP-bound inactive form of rab-3 and cab-1 to the GTP-bound active forms. Regulator of presynaptic activity that interacts with rab-3 to regulate synaptic vesicle release. Is also a regulator of the cab-1 synaptic transmission pathway. Probably by converting rab-3 to its GTP-bound active form, plays a role in the recruitment of endophilin unc-57 to synaptic vesicles. Probably by activating rab-3 and thus regulating the trafficking of dense-core vesicles, plays a role in AVG neuron-mediated formation of the right axon tract of the ventral nerve cord. Regulates anterior body muscle contractions (aBOC) and the expulsion steps during the defecation motor program (DMP). Probably by regulating DMP, required for fatty acid uptake by intestinal cells. This Caenorhabditis elegans protein is MAP kinase-activating death domain protein (aex-3).